We begin with the raw amino-acid sequence, 616 residues long: Replication protein A 70 kDa DNA-binding subunit (616 aa).

M1 carries the N-acetylmethionine modification. Glycyl lysine isopeptide (Lys-Gly) (interchain with G-Cter in ubiquitin) cross-links involve residues K22 and K88. Positions 121–154 (GLGQPQVAPPAPAASPAASSRPQPQNGSSGMGST) are disordered. The span at 134–145 (ASPAASSRPQPQ) shows a compositional bias: low complexity. N6-acetyllysine; alternate is present on residues K163 and K167. Residues K163 and K167 each participate in a glycyl lysine isopeptide (Lys-Gly) (interchain with G-Cter in ubiquitin); alternate cross-link. Position 180 is a phosphothreonine (T180). A Glycyl lysine isopeptide (Lys-Gly) (interchain with G-Cter in ubiquitin) cross-link involves residue K183. Position 191 is a phosphothreonine (T191). The OB DNA-binding region spans 197 to 281 (WTICARVTNK…VKNDYEMTFN (85 aa)). Glycyl lysine isopeptide (Lys-Gly) (interchain with G-Cter in ubiquitin) cross-links involve residues K220 and K244. K259 bears the N6-acetyllysine; alternate mark. K259 is covalently cross-linked (Glycyl lysine isopeptide (Lys-Gly) (interchain with G-Cter in ubiquitin); alternate). Glycyl lysine isopeptide (Lys-Gly) (interchain with G-Cter in ubiquitin) cross-links involve residues K267 and K331. S384 carries the post-translational modification Phosphoserine. Glycyl lysine isopeptide (Lys-Gly) (interchain with G-Cter in ubiquitin) cross-links involve residues K410 and K431. A Glycyl lysine isopeptide (Lys-Gly) (interchain with G-Cter in SUMO) cross-link involves residue K449. K458 is covalently cross-linked (Glycyl lysine isopeptide (Lys-Gly) (interchain with G-Cter in ubiquitin)). The C4-type zinc-finger motif lies at 481–503 (CPTQDCNKKVIDQQNGLYRCEKC). Residue K553 forms a Glycyl lysine isopeptide (Lys-Gly) (interchain with G-Cter in ubiquitin) linkage. A Glycyl lysine isopeptide (Lys-Gly) (interchain with G-Cter in SUMO) cross-link involves residue K577.

This sequence belongs to the replication factor A protein 1 family. Component of the canonical replication protein A complex (RPA), a heterotrimer composed of RPA1, RPA2 and RPA3. Also a component of the aRPA, the alternative replication protein A complex, a trimeric complex similar to the replication protein A complex/RPA but where RPA1 and RPA3 are associated with RPA4 instead of RPA2. The DNA-binding activity may reside exclusively on the RPA1 subunit. Interacts with PRPF19; the PRP19-CDC5L complex is recruited to the sites of DNA repair where it ubiquitinates the replication protein A complex (RPA). Interacts with RIPK1. Interacts with the polymerase alpha subunit POLA1/p180; this interaction stabilizes the replicative complex and reduces the misincorporation rate of DNA polymerase alpha by acting as a fidelity clamp. Interacts with RAD51 and SENP6 to regulate DNA repair. Interacts with HELB; this interaction promotes HELB recruitment to chromatin following DNA damage. Interacts with PRIMPOL; leading to recruit PRIMPOL on chromatin and stimulate its DNA primase activity. Interacts with XPA; the interaction is direct and associates XPA with the RPA complex. Interacts with ETAA1; the interaction is direct and promotes ETAA1 recruitment at stalled replication forks. Interacts with RPA1; this interaction associates HROB with the RPA complex. Interacts (when poly-ADP-ribosylated) with HTATSF1. Interacts with BRIP1/FANCJ via this RPA1 subunit; following DNA damage they colocalize in foci in the nucleus. DNA damage-induced 'Lys-63'-linked polyubiquitination by PRPF19 mediates ATRIP recruitment to the RPA complex at sites of DNA damage and activation of ATR. Ubiquitinated by RFWD3 at stalled replication forks in response to DNA damage: ubiquitination by RFWD3 does not lead to degradation by the proteasome and promotes removal of the RPA complex from stalled replication forks, promoting homologous recombination. In terms of processing, sumoylated on lysine residues Lys-449 and Lys-577, with Lys-449 being the major site. Sumoylation promotes recruitment of RAD51 to the DNA damage foci to initiate DNA repair through homologous recombination. Desumoylated by SENP6. Post-translationally, poly-ADP-ribosylated by PARP1; promoting recruitment of HTATSF1.

The protein resides in the nucleus. It localises to the PML body. Its function is as follows. As part of the heterotrimeric replication protein A complex (RPA/RP-A), binds and stabilizes single-stranded DNA intermediates that form during DNA replication or upon DNA stress. It prevents their reannealing and in parallel, recruits and activates different proteins and complexes involved in DNA metabolism. Thereby, it plays an essential role both in DNA replication and the cellular response to DNA damage. In the cellular response to DNA damage, the RPA complex controls DNA repair and DNA damage checkpoint activation. Through recruitment of ATRIP activates the ATR kinase a master regulator of the DNA damage response. It is required for the recruitment of the DNA double-strand break repair factors RAD51 and RAD52 to chromatin in response to DNA damage. Also recruits to sites of DNA damage proteins like XPA and XPG that are involved in nucleotide excision repair and is required for this mechanism of DNA repair. Also plays a role in base excision repair (BER) probably through interaction with UNG. Also recruits SMARCAL1/HARP, which is involved in replication fork restart, to sites of DNA damage. Plays a role in telomere maintenance. As part of the alternative replication protein A complex, aRPA, binds single-stranded DNA and probably plays a role in DNA repair. Compared to the RPA2-containing, canonical RPA complex, may not support chromosomal DNA replication and cell cycle progression through S-phase. The aRPA may not promote efficient priming by DNA polymerase alpha but could support DNA synthesis by polymerase delta in presence of PCNA and replication factor C (RFC), the dual incision/excision reaction of nucleotide excision repair and RAD51-dependent strand exchange. RPA stimulates 5'-3' helicase activity of the BRIP1/FANCJ. The polypeptide is Replication protein A 70 kDa DNA-binding subunit (RPA1) (Homo sapiens (Human)).